A 48-amino-acid polypeptide reads, in one-letter code: DNA gyrase inhibitor YacG (48 aa).

Cys-9, Cys-12, Cys-28, and Cys-32 together coordinate Zn(2+).

The protein belongs to the DNA gyrase inhibitor YacG family. As to quaternary structure, interacts with GyrB. Zn(2+) serves as cofactor.

Inhibits all the catalytic activities of DNA gyrase by preventing its interaction with DNA. Acts by binding directly to the C-terminal domain of GyrB, which probably disrupts DNA binding by the gyrase. The sequence is that of DNA gyrase inhibitor YacG from Wigglesworthia glossinidia brevipalpis.